Consider the following 377-residue polypeptide: Succinyl-diaminopimelate desuccinylase (377 aa).

His67 contacts Zn(2+). Asp69 is a catalytic residue. A Zn(2+)-binding site is contributed by Asp100. Glu134 serves as the catalytic Proton acceptor. Glu135, Glu163, and His349 together coordinate Zn(2+).

Belongs to the peptidase M20A family. DapE subfamily. As to quaternary structure, homodimer. Zn(2+) serves as cofactor. Co(2+) is required as a cofactor.

The catalysed reaction is N-succinyl-(2S,6S)-2,6-diaminopimelate + H2O = (2S,6S)-2,6-diaminopimelate + succinate. It participates in amino-acid biosynthesis; L-lysine biosynthesis via DAP pathway; LL-2,6-diaminopimelate from (S)-tetrahydrodipicolinate (succinylase route): step 3/3. Functionally, catalyzes the hydrolysis of N-succinyl-L,L-diaminopimelic acid (SDAP), forming succinate and LL-2,6-diaminopimelate (DAP), an intermediate involved in the bacterial biosynthesis of lysine and meso-diaminopimelic acid, an essential component of bacterial cell walls. The sequence is that of Succinyl-diaminopimelate desuccinylase from Haemophilus influenzae (strain PittEE).